A 304-amino-acid polypeptide reads, in one-letter code: Glutaminase (304 aa).

The substrate site is built by Ser63, Asn113, Glu157, Asn164, Tyr188, Tyr240, and Val258.

Belongs to the glutaminase family. Homotetramer.

The enzyme catalyses L-glutamine + H2O = L-glutamate + NH4(+). This chain is Glutaminase, found in Paraburkholderia phytofirmans (strain DSM 17436 / LMG 22146 / PsJN) (Burkholderia phytofirmans).